The following is a 371-amino-acid chain: Glycerate kinase (371 aa).

It belongs to the glycerate kinase type-1 family.

The enzyme catalyses (R)-glycerate + ATP = (2R)-3-phosphoglycerate + ADP + H(+). This Neisseria meningitidis serogroup B (strain ATCC BAA-335 / MC58) protein is Glycerate kinase (glxK).